The primary structure comprises 469 residues: 6-phosphofructo-2-kinase/fructose-2,6-bisphosphatase 4 (469 aa).

Positions Met-1–Pro-249 are 6-phosphofructo-2-kinase. Gly-46–Tyr-54 serves as a coordination point for ATP. Beta-D-fructose 6-phosphate-binding residues include Arg-79 and Arg-103. Residue Asp-129 is part of the active site. Thr-131 and Arg-137 together coordinate beta-D-fructose 6-phosphate. Cys-159 is a catalytic residue. Position 168 to 173 (Asn-168 to Lys-173) interacts with ATP. Beta-D-fructose 6-phosphate contacts are provided by Lys-173, Arg-194, and Tyr-198. The tract at residues Arg-250 to Gln-469 is fructose-2,6-bisphosphatase. Arg-256 provides a ligand contact to beta-D-fructose 2,6-bisphosphate. His-257 serves as the catalytic Tele-phosphohistidine intermediate. Beta-D-fructose 2,6-bisphosphate contacts are provided by Asn-263, Gly-269, and Arg-306. Glu-326 acts as the Proton donor/acceptor in catalysis. Residues Tyr-337, Arg-351, Lys-355, Tyr-366, Gln-392, and Arg-396 each coordinate beta-D-fructose 2,6-bisphosphate. Phe-348 to Arg-351 lines the ATP pocket. ATP contacts are provided by residues Gln-392–Arg-396 and Tyr-428. Thr-444 bears the Phosphothreonine; by PKC mark.

It in the C-terminal section; belongs to the phosphoglycerate mutase family. Homodimer.

The enzyme catalyses beta-D-fructose 2,6-bisphosphate + H2O = beta-D-fructose 6-phosphate + phosphate. It carries out the reaction beta-D-fructose 6-phosphate + ATP = beta-D-fructose 2,6-bisphosphate + ADP + H(+). Its activity is regulated as follows. The most important regulatory mechanism of these opposing activities is by phosphorylation and dephosphorylation of the enzyme. In terms of biological role, synthesis and degradation of fructose 2,6-bisphosphate. The sequence is that of 6-phosphofructo-2-kinase/fructose-2,6-bisphosphatase 4 (PFKFB4) from Homo sapiens (Human).